We begin with the raw amino-acid sequence, 609 residues long: 2',5'-phosphodiesterase 12 (609 aa).

Residues 1–16 (MWRLPGVRAALRGVRT) constitute a mitochondrion transit peptide. The tract at residues 203–231 (PRAAEPEGGGPSSSSPSSPSPGWTETGVD) is disordered. Over residues 214–224 (SSSSPSSPSPG) the composition is skewed to low complexity. Ser-217 carries the post-translational modification Phosphoserine. Glu-351, Asp-496, and Asn-498 together coordinate Mg(2+). Catalysis depends on Asp-496, which acts as the Proton donor/acceptor.

It belongs to the CCR4/nocturin family. Mg(2+) is required as a cofactor. In terms of tissue distribution, liver.

It localises to the mitochondrion matrix. It carries out the reaction Exonucleolytic cleavage of poly(A) to 5'-AMP.. Functionally, enzyme that cleaves 2',5'-phosphodiester bond linking adenosines of the 5'-triphosphorylated oligoadenylates, triphosphorylated oligoadenylates referred as 2-5A modulates the 2-5A system. Degrades triphosphorylated 2-5A to produce AMP and ATP. Also cleaves 3',5'-phosphodiester bond of oligoadenylates. Plays a role as a negative regulator of the 2-5A system that is one of the major pathways for antiviral and antitumor functions induced by interferons (IFNs). Suppression of this enzyme increases cellular 2-5A levels and decreases viral replication in cultured small-airway epithelial cells. This chain is 2',5'-phosphodiesterase 12 (PDE12), found in Bos taurus (Bovine).